The sequence spans 299 residues: Acetyl-coenzyme A carboxylase carboxyl transferase subunit beta (299 aa).

The 270-residue stretch at 25 to 294 (VWTKCTSCEQ…PFVEPELIQE (270 aa)) folds into the CoA carboxyltransferase N-terminal domain. Zn(2+)-binding residues include Cys29, Cys32, Cys48, and Cys51. The segment at 29-51 (CTSCEQVLYRDELKRHLEVCPKC) adopts a C4-type zinc-finger fold.

This sequence belongs to the AccD/PCCB family. As to quaternary structure, acetyl-CoA carboxylase is a heterohexamer composed of biotin carboxyl carrier protein (AccB), biotin carboxylase (AccC) and two subunits each of ACCase subunit alpha (AccA) and ACCase subunit beta (AccD). It depends on Zn(2+) as a cofactor.

Its subcellular location is the cytoplasm. It catalyses the reaction N(6)-carboxybiotinyl-L-lysyl-[protein] + acetyl-CoA = N(6)-biotinyl-L-lysyl-[protein] + malonyl-CoA. The protein operates within lipid metabolism; malonyl-CoA biosynthesis; malonyl-CoA from acetyl-CoA: step 1/1. Functionally, component of the acetyl coenzyme A carboxylase (ACC) complex. Biotin carboxylase (BC) catalyzes the carboxylation of biotin on its carrier protein (BCCP) and then the CO(2) group is transferred by the transcarboxylase to acetyl-CoA to form malonyl-CoA. In Histophilus somni (strain 129Pt) (Haemophilus somnus), this protein is Acetyl-coenzyme A carboxylase carboxyl transferase subunit beta.